Here is a 315-residue protein sequence, read N- to C-terminus: Ankyrin repeat domain-containing protein EMB506, chloroplastic (315 aa).

The transit peptide at 1 to 39 (MVSSVLSIPPQTCLLPRLPISDSVNCKSKIVYCLSTSVR) directs the protein to the chloroplast. The segment covering 44-65 (KRQSTARTRSFTETNRRTPSVQ) has biased composition (polar residues). The tract at residues 44–106 (KRQSTARTRS…DNESDWEDDS (63 aa)) is disordered. The segment covering 72–104 (EDPDDGSDSENEYEGEEEDGIGNDLDNESDWED) has biased composition (acidic residues). ANK repeat units follow at residues 151–180 (KSWKPLQTLALSMQIQLMDNLIENGLDIDD), 184–213 (DNQTALHKAIIGKKEAVISHLLRKGANPHL), 217–246 (DGAAPIHYAVQVGALQTVKLLFKYNVDVNV), 250–279 (EGWTPLHIAVQSRNRDITKILLTNGADKTR), and 283–307 (DGKLALDLALCFGRDFKSYDLVKLL).

As to quaternary structure, interacts with AKR. No homodimerization observed. In terms of tissue distribution, expressed in roots, inflorescence stems, flowers, siliques, dry seeds and mature cauline leaves.

The protein resides in the plastid. It is found in the chloroplast. Involved in the initial differentiation of the proplastid during the embryo development. Also required for correct cotyledon, true leaf and cauline leaf margin development. The chain is Ankyrin repeat domain-containing protein EMB506, chloroplastic (EMB506) from Arabidopsis thaliana (Mouse-ear cress).